The primary structure comprises 200 residues: Holliday junction branch migration complex subunit RuvA (200 aa).

The segment at 1-64 is domain I; that stretch reads MIGQLTGLVG…EDAIQLFGFA (64 aa). A domain II region spans residues 65-143; it reads TTDERDWFRL…KMPGGGGTVS (79 aa). The flexible linker stretch occupies residues 144 to 148; sequence APGIV. Positions 149 to 200 are domain III; that stretch reads SGPSVENDALLALAGLGFRRAEAWPVLSKVLAENENATLDLAIRLSLKDLAR.

Belongs to the RuvA family. Homotetramer. Forms an RuvA(8)-RuvB(12)-Holliday junction (HJ) complex. HJ DNA is sandwiched between 2 RuvA tetramers; dsDNA enters through RuvA and exits via RuvB. An RuvB hexamer assembles on each DNA strand where it exits the tetramer. Each RuvB hexamer is contacted by two RuvA subunits (via domain III) on 2 adjacent RuvB subunits; this complex drives branch migration. In the full resolvosome a probable DNA-RuvA(4)-RuvB(12)-RuvC(2) complex forms which resolves the HJ.

The protein resides in the cytoplasm. In terms of biological role, the RuvA-RuvB-RuvC complex processes Holliday junction (HJ) DNA during genetic recombination and DNA repair, while the RuvA-RuvB complex plays an important role in the rescue of blocked DNA replication forks via replication fork reversal (RFR). RuvA specifically binds to HJ cruciform DNA, conferring on it an open structure. The RuvB hexamer acts as an ATP-dependent pump, pulling dsDNA into and through the RuvAB complex. HJ branch migration allows RuvC to scan DNA until it finds its consensus sequence, where it cleaves and resolves the cruciform DNA. This is Holliday junction branch migration complex subunit RuvA from Gluconobacter oxydans (strain 621H) (Gluconobacter suboxydans).